Here is a 120-residue protein sequence, read N- to C-terminus: Small ribosomal subunit protein uS13 (120 aa).

Residues 94 to 120 (GLPLRGQRTRTNARTRKGPRKAIAGKK) form a disordered region.

The protein belongs to the universal ribosomal protein uS13 family. In terms of assembly, part of the 30S ribosomal subunit. Forms a loose heterodimer with protein S19. Forms two bridges to the 50S subunit in the 70S ribosome.

Functionally, located at the top of the head of the 30S subunit, it contacts several helices of the 16S rRNA. In the 70S ribosome it contacts the 23S rRNA (bridge B1a) and protein L5 of the 50S subunit (bridge B1b), connecting the 2 subunits; these bridges are implicated in subunit movement. Contacts the tRNAs in the A and P-sites. This chain is Small ribosomal subunit protein uS13, found in Azoarcus sp. (strain BH72).